The chain runs to 89 residues: MAISKEKKNEIIKQFATHEGDTGSTQVQVAVLTADINELNEHLREHKHDYHSQRGLMKKIGHRRNLLAYLRRTDLPAYRELIKALGLRR.

The protein belongs to the universal ribosomal protein uS15 family. As to quaternary structure, part of the 30S ribosomal subunit. Forms a bridge to the 50S subunit in the 70S ribosome, contacting the 23S rRNA.

Functionally, one of the primary rRNA binding proteins, it binds directly to 16S rRNA where it helps nucleate assembly of the platform of the 30S subunit by binding and bridging several RNA helices of the 16S rRNA. Forms an intersubunit bridge (bridge B4) with the 23S rRNA of the 50S subunit in the ribosome. The polypeptide is Small ribosomal subunit protein uS15 (Limosilactobacillus fermentum (strain NBRC 3956 / LMG 18251) (Lactobacillus fermentum)).